A 170-amino-acid polypeptide reads, in one-letter code: Bifunctional protein PyrR (170 aa).

The short motif at 90-102 is the PRPP-binding element; that stretch reads LVLIDDVLMSGRT.

This sequence belongs to the purine/pyrimidine phosphoribosyltransferase family. PyrR subfamily.

The catalysed reaction is UMP + diphosphate = 5-phospho-alpha-D-ribose 1-diphosphate + uracil. Regulates the transcription of the pyrimidine nucleotide (pyr) operon in response to exogenous pyrimidines. Its function is as follows. Also displays a weak uracil phosphoribosyltransferase activity which is not physiologically significant. In Pseudomonas syringae pv. tomato (strain ATCC BAA-871 / DC3000), this protein is Bifunctional protein PyrR.